Consider the following 184-residue polypeptide: Fanconi anemia core complex-associated protein 20 (184 aa).

2 disordered regions span residues 1–30 and 46–81; these read MEEE…PWFL and TVGG…TVPP. A compositionally biased stretch (basic residues) spans 7–16; it reads LRGRLSRRRP. A compositionally biased stretch (polar residues) spans 47-57; the sequence is VGGNTDWTPNS. Residue serine 119 is modified to Phosphoserine. Residues 148-184 form a UBZ2-type zinc finger; the sequence is LLNCPLCQKAFDPKLTQLDVDSHLAQCLAESTEDVVW. The Zn(2+) site is built by cysteine 151, cysteine 154, histidine 170, and cysteine 174.

As to quaternary structure, component of the Fanconi anemia (FA) complex. Interacts with FANCA; interaction is direct. Interacts with REV1.

Its subcellular location is the nucleus. It localises to the chromosome. Component of the Fanconi anemia (FA) complex required to recruit the FA complex to DNA interstrand cross-links (ICLs) and promote ICLs repair. Following DNA damage recognizes and binds 'Lys-63'-linked ubiquitin generated by RNF8 at ICLs and recruits other components of the FA complex. Promotes translesion synthesis via interaction with REV1. This chain is Fanconi anemia core complex-associated protein 20, found in Rattus norvegicus (Rat).